A 174-amino-acid polypeptide reads, in one-letter code: Beta-lactoglobulin (174 aa).

The N-terminal stretch at 1–18 (MKFLLLTVGLALIGAIQA) is a signal peptide. 2 cysteine pairs are disulfide-bonded: Cys79–Cys172 and Cys122–Cys134.

Belongs to the calycin superfamily. Lipocalin family. In terms of assembly, monomer.

Its subcellular location is the secreted. Functionally, lactoglobulin is the primary component of whey, it binds retinol and is probably involved in the transport of that molecule. The chain is Beta-lactoglobulin (LGB) from Notamacropus eugenii (Tammar wallaby).